Consider the following 450-residue polypeptide: Glutathione reductase (450 aa).

7 residues coordinate FAD: Ser14, Gly15, Glu34, Thr41, Cys42, Lys50, and Ala115. Residue Ser14 participates in glutathione binding. Cysteines 42 and 47 form a disulfide. 6 residues coordinate NADP(+): Ala175, Ile178, Glu181, Arg198, Arg204, and Gly262. An FAD-binding site is contributed by Asp303. An NADP(+)-binding site is contributed by Asp309. Thr311 lines the FAD pocket. Residue Arg319 coordinates glutathione. Residue Val342 coordinates NADP(+). FAD is bound at residue His439. The active-site Proton acceptor is His439.

Belongs to the class-I pyridine nucleotide-disulfide oxidoreductase family. Homodimer. Requires FAD as cofactor.

The protein resides in the cytoplasm. The enzyme catalyses 2 glutathione + NADP(+) = glutathione disulfide + NADPH + H(+). Its function is as follows. Catalyzes the reduction of glutathione disulfide (GSSG) to reduced glutathione (GSH). Constitutes the major mechanism to maintain a high GSH:GSSG ratio in the cytosol. This Streptococcus thermophilus protein is Glutathione reductase (gor).